The primary structure comprises 738 residues: Protein Aster-B (738 aa).

Residues 1-81 (MKGFKLSCTA…SGGKNSKKSQ (81 aa)) are disordered. The segment covering 8–19 (CTASNSNRSTPA) has biased composition (polar residues). Phosphoserine is present on residues S28 and S30. Basic and acidic residues predominate over residues 41-51 (MVEKGSDHSSD). A compositionally biased stretch (low complexity) spans 59–70 (QGVQRSCSSQSG). Positions 96–163 (EDFRKLFKQL…KDICSMTKEK (68 aa)) constitute a GRAM domain. Residues 254–301 (EENEVNDSSSKSSIETKPDASPQLPKKSITNSTLTSTGSSEAPVSFDG) are disordered. A compositionally biased stretch (polar residues) spans 259–268 (NDSSSKSSIE). At S274 the chain carries Phosphoserine. The span at 281–295 (SITNSTLTSTGSSEA) shows a compositional bias: polar residues. The 172-residue stretch at 372–543 (SGRQYVNEVF…ELAKTESTYL (172 aa)) folds into the VASt domain. Position 389 is a phosphotyrosine (Y389). Residues 544–566 (AEMHRQSPKEKASKTTTVRRRKR) form a disordered region. Basic and acidic residues predominate over residues 545–556 (EMHRQSPKEKAS). Residues S550 and S581 each carry the phosphoserine modification. Phosphothreonine is present on residues T584, T585, and T587. Residues 623–643 (LLLVISCVICFSLVLLVILNM) form a helical membrane-spanning segment.

It localises to the endoplasmic reticulum membrane. Its subcellular location is the cell membrane. Its function is as follows. Cholesterol transporter that mediates non-vesicular transport of cholesterol from the plasma membrane (PM) to the endoplasmic reticulum (ER). Contains unique domains for binding cholesterol and the PM, thereby serving as a molecular bridge for the transfer of cholesterol from the PM to the ER. Plays a crucial role in cholesterol homeostasis in the adrenal gland and has the unique ability to localize to the PM based on the level of membrane cholesterol. In lipid-poor conditions localizes to the ER membrane and in response to excess cholesterol in the PM is recruited to the endoplasmic reticulum-plasma membrane contact sites (EPCS) which is mediated by the GRAM domain. At the EPCS, the sterol-binding VASt/ASTER domain binds to the cholesterol in the PM and facilitates its transfer from the PM to ER. This Homo sapiens (Human) protein is Protein Aster-B (GRAMD1B).